We begin with the raw amino-acid sequence, 482 residues long: Ribulose bisphosphate carboxylase large chain (482 aa).

Residues 1–2 constitute a propeptide that is removed on maturation; sequence MS. Position 3 is an N-acetylproline (Pro3). The residue at position 14 (Lys14) is an N6,N6,N6-trimethyllysine. Residues Asn123 and Thr173 each contribute to the substrate site. Lys175 functions as the Proton acceptor in the catalytic mechanism. Lys177 lines the substrate pocket. Lys201, Asp203, and Glu204 together coordinate Mg(2+). At Lys201 the chain carries N6-carboxylysine. His294 serves as the catalytic Proton acceptor. Substrate-binding residues include Arg295, His327, and Ser379.

Belongs to the RuBisCO large chain family. Type I subfamily. Heterohexadecamer of 8 large chains and 8 small chains; disulfide-linked. The disulfide link is formed within the large subunit homodimers. Mg(2+) serves as cofactor. In terms of processing, the disulfide bond which can form in the large chain dimeric partners within the hexadecamer appears to be associated with oxidative stress and protein turnover.

The protein localises to the plastid. The protein resides in the chloroplast. It catalyses the reaction 2 (2R)-3-phosphoglycerate + 2 H(+) = D-ribulose 1,5-bisphosphate + CO2 + H2O. The enzyme catalyses D-ribulose 1,5-bisphosphate + O2 = 2-phosphoglycolate + (2R)-3-phosphoglycerate + 2 H(+). In terms of biological role, ruBisCO catalyzes two reactions: the carboxylation of D-ribulose 1,5-bisphosphate, the primary event in carbon dioxide fixation, as well as the oxidative fragmentation of the pentose substrate in the photorespiration process. Both reactions occur simultaneously and in competition at the same active site. The polypeptide is Ribulose bisphosphate carboxylase large chain (Stegnosperma halimifolium).